A 497-amino-acid chain; its full sequence is Probable sensor kinase SilS (497 aa).

The Cytoplasmic segment spans residues 1-15; sequence MHSKPSRLPFSLALR. Residues 16 to 36 traverse the membrane as a helical segment; that stretch reads LTFFISLSTILAFIAFTWFML. Topologically, residues 37 to 186 are periplasmic; sequence HSVEKHFAEQ…HLHYLDALKK (150 aa). A helical membrane pass occupies residues 187 to 207; sequence NLIAIAVVISLLIVLIIRIAV. Residues 208–261 enclose the HAMP domain; the sequence is RQGHLPLRNVSNAIKNITSENLDARLEPTRVPIELEQLVISFNHMIGKIEDVFT. The Cytoplasmic segment spans residues 208-497; it reads RQGHLPLRNV…KMIPDTQCWE (290 aa). A Histidine kinase domain is found at 269 to 487; the sequence is DIAHEIRTPI…RFILSVPRLE (219 aa). H272 is subject to Phosphohistidine; by autocatalysis.

Its subcellular location is the cell inner membrane. It catalyses the reaction ATP + protein L-histidine = ADP + protein N-phospho-L-histidine.. Component of the sil cation-efflux system that confers resistance to silver. Probable member of a two-component regulatory system SilS/SilR. May activate SilR by phosphorylation. In Salmonella typhimurium, this protein is Probable sensor kinase SilS (silS).